A 1190-amino-acid polypeptide reads, in one-letter code: MTGRLVQYGRHRQRRSYARISEVLELPNLIEIQTSSYQWFLDEGLREMFREISPIEDFSGNLSLEFIDYSLGEPKYTVEEAKERDVTYAAPLRVKVRLINKETGEVKEQDVFMGDFPLMTETGTFIINGAERVIVSQLVRSPSVYYSDKVDKNGKRGYSATVIPNRGAWLEYETDAKDVVYVRIDRTRKLPVTVLLRALGFSSDQEIIDLLGDNEYLRNTLEKDNTDSTEKALIEIYERLRPGEPPTLENAKNLLASRFFDPKRYDLASVGRYKINKKLHIKNRLFNQRLAETIIDPETKEVIAEAGAMIDRRTLNRLLPYLEKGVGLQTYRPAEGVVDGDISVQTIKIYAPNDPDGEKVINVIGNGFIAEDVKHITPADIIASISYFFNLLHGVGDTDDIDHLGNRRLRSVGELLQNQFRIGLSRMERVVRERMSIQDTNTITPQQLINIRPVIAAIKEFFGSSQLSQFMDQTNPLAELTHKRRLSALGPGGLTRERAGFEVRDVHYSHYGRMCPIETPEGPNIGLINSLSTYAKVNKFGFIETPYRRVDPETGRVTDQIDYLTADEEDNYVVAQANVPLAEDGTFLEENVVARFRGENIVVKRDRVDYMDVSPKQVVSAATACIPFLENDDSNRALMGANMQRQAVPLLEPEAPIVGTGMEYVSAKDSGAAVICKHRGIVERVEAKEIWVRRLIEVDGKEVKGDLDKYRLLKFVRSNQGTCYNQRPIVKKGDIVEKGEILADGPSMDKGELALGRNVLVAFMTWDGYNYEDAIIMSERLVKEDVYTSIHIEEYEAESRDTKLGPEEITRDIPNVGEDALKNLDERGIVRIGAEVKDGDLLVGKVTPKGMTELTAEERLLHAIFGEKAREVRDTSLRVPHGGGGIVLDVKVFNREDGDELPPGVNQLVRVYIVQKRKISEGDKMAGRHGNKGVISRILPEEDMPFLPDGTPIDIMLNPLGVPSRMNIGQVFELHLGMAAKKLGLHIASPVFDGATEEDVWNILEEAGLARDAKTVLYDGRTGEPFDNRVSVGIMYMIKLAHMVDDKLHARSTGPYSLVTQQPLGGKAQFGGQRFGEMEVWALEAYGAAYTLQEILTVKSDDVVGRVKTYEAIVKGENIPEPGVPESFKVLIKELQSLGMDVTILTSDEQEVNMENFDDDDDHAPDAIMVDVKPAEREEAGEEKDAVTKE.

Residues 1155–1190 (ENFDDDDDHAPDAIMVDVKPAEREEAGEEKDAVTKE) are disordered. A compositionally biased stretch (basic and acidic residues) spans 1173–1190 (KPAEREEAGEEKDAVTKE).

Belongs to the RNA polymerase beta chain family. As to quaternary structure, the RNAP catalytic core consists of 2 alpha, 1 beta, 1 beta' and 1 omega subunit. When a sigma factor is associated with the core the holoenzyme is formed, which can initiate transcription.

The catalysed reaction is RNA(n) + a ribonucleoside 5'-triphosphate = RNA(n+1) + diphosphate. Its function is as follows. DNA-dependent RNA polymerase catalyzes the transcription of DNA into RNA using the four ribonucleoside triphosphates as substrates. This is DNA-directed RNA polymerase subunit beta from Geobacillus kaustophilus (strain HTA426).